The sequence spans 151 residues: 3-hydroxyacyl-[acyl-carrier-protein] dehydratase FabZ (151 aa).

His-53 is an active-site residue.

This sequence belongs to the thioester dehydratase family. FabZ subfamily.

The protein resides in the cytoplasm. It catalyses the reaction a (3R)-hydroxyacyl-[ACP] = a (2E)-enoyl-[ACP] + H2O. Functionally, involved in unsaturated fatty acids biosynthesis. Catalyzes the dehydration of short chain beta-hydroxyacyl-ACPs and long chain saturated and unsaturated beta-hydroxyacyl-ACPs. The sequence is that of 3-hydroxyacyl-[acyl-carrier-protein] dehydratase FabZ from Erythrobacter litoralis (strain HTCC2594).